The following is a 433-amino-acid chain: Homogentisate 1,2-dioxygenase (433 aa).

The active-site Proton acceptor is the His-288. Fe cation contacts are provided by His-331 and Glu-337. Tyr-346 and His-367 together coordinate homogentisate. His-367 lines the Fe cation pocket.

Belongs to the homogentisate dioxygenase family. As to quaternary structure, hexamer; dimer of trimers. Requires Fe cation as cofactor.

The catalysed reaction is homogentisate + O2 = 4-maleylacetoacetate + H(+). Its pathway is amino-acid degradation; L-phenylalanine degradation; acetoacetate and fumarate from L-phenylalanine: step 4/6. In terms of biological role, involved in the catabolism of homogentisate (2,5-dihydroxyphenylacetate or 2,5-OH-PhAc), a central intermediate in the degradation of phenylalanine and tyrosine. Catalyzes the oxidative ring cleavage of the ar omatic ring of 2,5-dihydroxyphenylacetate to yield maleylacetoacetate. This is Homogentisate 1,2-dioxygenase from Pseudomonas putida (strain ATCC 47054 / DSM 6125 / CFBP 8728 / NCIMB 11950 / KT2440).